The primary structure comprises 920 residues: 3-hydroxy-3-methylglutaryl-coenzyme A reductase (920 aa).

Residues 12–32 (FCASHPWEVIVALLTITACML) traverse the membrane as a helical segment. N-linked (GlcNAc...) asparagine glycosylation is present at Asn37. The segment at 62 to 85 (GAGSGASGTIPPSSMGGSATSSRH) is disordered. The span at 71 to 82 (IPPSSMGGSATS) shows a compositional bias: polar residues. An SSD domain is found at 106–263 (DVILMTIVRC…MTFYPACLSL (158 aa)). The next 5 helical transmembrane spans lie at 107–129 (VILMTIVRCTAVLYCYYQFCSLH), 136–156 (VLGIAGLFTVFSSFIFTTAII), 170–190 (LFFLLLVIDLSNSGRLAQLAL), 208–228 (LLGPAISLDTIVEVLLVGVGT), and 237–257 (VLCMFAVLSVLVNYVVFMTFY). Asn342 and Asn346 each carry an N-linked (GlcNAc...) asparagine glycan. A helical transmembrane segment spans residues 364–384 (SADHIVISIVLIALVVKFICF). The tract at residues 385-498 (DNRDPLPDQL…EEIVSIVHAG (114 aa)) is linker. N-linked (GlcNAc...) asparagine glycosylation is found at Asn443 and Asn475. Residues 499-829 (GTHCPLHKIE…TCTMPSLEVG (331 aa)) are catalytic. Active-site charge relay system residues include Glu586, Lys717, and Asp793. 2 N-linked (GlcNAc...) asparagine glycosylation sites follow: Asn797 and Asn802. His892 functions as the Proton donor in the catalytic mechanism. N-linked (GlcNAc...) asparagine glycans are attached at residues Asn896 and Asn910.

Belongs to the HMG-CoA reductase family. In terms of tissue distribution, highly expressed in embryonic gonadal mesoderm, where expression is initially broad, and then becomes restricted to a segmental pattern at stage 11. Expression is then further restricted to a cluster of cells in each of parasegments 10, 11 and 12, corresponding to the developing gonadal mesoderm. Not expressed in pole cells.

Its subcellular location is the endoplasmic reticulum membrane. It catalyses the reaction (R)-mevalonate + 2 NADP(+) + CoA = (3S)-3-hydroxy-3-methylglutaryl-CoA + 2 NADPH + 2 H(+). It functions in the pathway metabolic intermediate biosynthesis; (R)-mevalonate biosynthesis; (R)-mevalonate from acetyl-CoA: step 3/3. With respect to regulation, the activity of HMG-CoA-reductase is suppressed by exogenous mevalonate. Synthesis of mevalonate for the production of non-sterol isoprenoids, which are essential for growth differentiation. Provides spatial information during embryogenesis to guide migrating primordial germ cells (the pole cells) from the ectoderm to the mesoderm. Also required for association of the pole cells with the gonadal mesoderm. This is 3-hydroxy-3-methylglutaryl-coenzyme A reductase (Hmgcr) from Drosophila melanogaster (Fruit fly).